Consider the following 335-residue polypeptide: Tryptophan--tRNA ligase (335 aa).

Residues 13–15 (QPS) and 21–22 (GN) each bind ATP. Positions 14 to 22 (PSGELTIGN) match the 'HIGH' region motif. D138 is a binding site for L-tryptophan. ATP contacts are provided by residues 150 to 152 (GKD), I189, and 198 to 202 (KMSKS). A 'KMSKS' region motif is present at residues 198–202 (KMSKS).

It belongs to the class-I aminoacyl-tRNA synthetase family. As to quaternary structure, homodimer.

The protein localises to the cytoplasm. The enzyme catalyses tRNA(Trp) + L-tryptophan + ATP = L-tryptophyl-tRNA(Trp) + AMP + diphosphate + H(+). In terms of biological role, catalyzes the attachment of tryptophan to tRNA(Trp). This is Tryptophan--tRNA ligase from Clostridium acetobutylicum (strain ATCC 824 / DSM 792 / JCM 1419 / IAM 19013 / LMG 5710 / NBRC 13948 / NRRL B-527 / VKM B-1787 / 2291 / W).